The following is a 90-amino-acid chain: DNA-directed RNA polymerase subunit omega (90 aa).

Belongs to the RNA polymerase subunit omega family. In terms of assembly, the RNAP catalytic core consists of 2 alpha, 1 beta, 1 beta' and 1 omega subunit. When a sigma factor is associated with the core the holoenzyme is formed, which can initiate transcription.

It carries out the reaction RNA(n) + a ribonucleoside 5'-triphosphate = RNA(n+1) + diphosphate. Functionally, promotes RNA polymerase assembly. Latches the N- and C-terminal regions of the beta' subunit thereby facilitating its interaction with the beta and alpha subunits. The polypeptide is DNA-directed RNA polymerase subunit omega (Alteromonas mediterranea (strain DSM 17117 / CIP 110805 / LMG 28347 / Deep ecotype)).